We begin with the raw amino-acid sequence, 591 residues long: Maintenance of mitochondrial morphology protein 1 (591 aa).

At 1–83 the chain is on the lumenal side; it reads MGFNIPWNGT…AQPSLSFTQG (83 aa). A helical membrane pass occupies residues 84-104; that stretch reads LLVGQLSVVLLIGAFIKFFIF. Topologically, residues 105-591 are cytoplasmic; the sequence is GEAPPPPSRS…GSMPDSVAVT (487 aa). Disordered regions lie at residues 138–159, 170–189, 334–398, and 479–591; these read PRTLREKPSTSNILRPVPSSST, YSATPTNPTSKHGRSRVHHS, PGTS…KHAH, and EAEA…VAVT. Composition is skewed to polar residues over residues 146–159 and 170–179; these read STSNILRPVPSSST and YSATPTNPTS. A compositionally biased stretch (basic residues) spans 180–189; the sequence is KHGRSRVHHS. The 271-residue stretch at 192 to 462 folds into the SMP-LTD domain; the sequence is QPESLDWFNV…EPRVQVVGLP (271 aa). Over residues 336-371 the composition is skewed to polar residues; the sequence is TSDQTMGPSASPPNQSTSTETASINDQTSEGQSTQR. The span at 379–389 shows a compositional bias: low complexity; that stretch reads PTNSTPTAATA. 2 stretches are compositionally biased toward gly residues: residues 496-525 and 536-550; these read TAGGDGMRGRGGGGGGGGLRGNSSGRGMGY and GDGGTGVVQGQGAGG. Basic and acidic residues predominate over residues 563–578; that stretch reads GGDDGEGPGRRSDERF.

Belongs to the MMM1 family. As to quaternary structure, homodimer. Component of the ER-mitochondria encounter structure (ERMES) or MDM complex, composed of MMM1, MDM10, MDM12 and MDM34. An MMM1 homodimer associates with one molecule of MDM12 on each side in a pairwise head-to-tail manner, and the SMP-LTD domains of MMM1 and MDM12 generate a continuous hydrophobic tunnel for phospholipid trafficking.

It is found in the endoplasmic reticulum membrane. Functionally, component of the ERMES/MDM complex, which serves as a molecular tether to connect the endoplasmic reticulum (ER) and mitochondria. Components of this complex are involved in the control of mitochondrial shape and protein biogenesis, and function in nonvesicular lipid trafficking between the ER and mitochondria. The MDM12-MMM1 subcomplex functions in the major beta-barrel assembly pathway that is responsible for biogenesis of all outer membrane beta-barrel proteins, and acts in a late step after the SAM complex. The MDM10-MDM12-MMM1 subcomplex further acts in the TOM40-specific pathway after the action of the MDM12-MMM1 complex. Essential for establishing and maintaining the structure of mitochondria and maintenance of mtDNA nucleoids. The polypeptide is Maintenance of mitochondrial morphology protein 1 (Ajellomyces capsulatus (strain G186AR / H82 / ATCC MYA-2454 / RMSCC 2432) (Darling's disease fungus)).